A 189-amino-acid polypeptide reads, in one-letter code: Putative manganese efflux pump MntP (189 aa).

6 consecutive transmembrane segments (helical) span residues 3 to 23 (PVSL…AAIG), 41 to 61 (IIFG…GQAA), 65 to 85 (VADW…LHMI), 106 to 128 (WILA…GLAF), 141 to 161 (GLAT…LGAV), and 168 to 188 (MVGG…HLSA).

This sequence belongs to the MntP (TC 9.B.29) family.

It localises to the cell inner membrane. In terms of biological role, probably functions as a manganese efflux pump. This is Putative manganese efflux pump MntP from Pseudomonas aeruginosa (strain LESB58).